The sequence spans 96 residues: Pollen allergen Dac g 3 (96 aa).

Residues 14–94 form the Expansin-like CBD domain; sequence KKLVLDIKYT…AFKIGTTYTP (81 aa).

Belongs to the expansin family. Expansin B subfamily.

The protein resides in the secreted. In Dactylis glomerata (Orchard grass), this protein is Pollen allergen Dac g 3.